The chain runs to 742 residues: F-box only protein 30 (742 aa).

Residues 49–108 (EHRLLCPFERVPCLNSNFGCPFTLARNKVAEHLEMCPASVVCCTMEWNRWPVSYSDRKSY) form a TRAF-type zinc finger. Residues 214–242 (SLQGTTNEMDEESNRESSQDRNAKDQDHL) form a disordered region. The span at 225–242 (ESNRESSQDRNAKDQDHL) shows a compositional bias: basic and acidic residues. Residue S379 is modified to Phosphoserine. The F-box domain maps to 607-653 (SDHLSSLPFEVLQHIAGFLDGFSLCQLACVSRLMRDICGSLLQSRGM).

Part of a SCF (SKP1-cullin-F-box) protein ligase complex. Interacts with SKP1, CUL1 and RBX1/ROC1. Auto-ubiquitinated. Post-translationally, may be neddylated. Neddylation may be required for E3 ligase activity.

It participates in protein modification; protein ubiquitination. Its function is as follows. Substrate-recognition component of the SCF (SKP1-CUL1-F-box protein)-type E3 ubiquitin ligase complex. Required for muscle atrophy following denervation. This Rattus norvegicus (Rat) protein is F-box only protein 30 (Fbxo30).